A 229-amino-acid chain; its full sequence is Cytochrome b6-f complex iron-sulfur subunit, chloroplastic (229 aa).

The transit peptide at 1–50 (MASSSLSPATQLGSSRSALMAMSSGLFVKPTKMNHQMVRKEKIGLRISCQ) directs the protein to the chloroplast. The helical transmembrane segment at 68–90 (LNLLLLGALSLPTGYMLVPYATF) threads the bilayer. Residues 115–211 (AAEWLKTHGP…ADIDEAGKVL (97 aa)) form the Rieske domain. Residues C157, H159, C175, and H178 each contribute to the [2Fe-2S] cluster site. Cysteines 162 and 177 form a disulfide. At S196 the chain carries Phosphoserine.

It belongs to the Rieske iron-sulfur protein family. The 4 large subunits of the cytochrome b6-f complex are cytochrome b6, subunit IV (17 kDa polypeptide, petD), cytochrome f and the Rieske protein, while the 4 small subunits are petG, petL, petM and petN. The complex functions as a dimer. Interacts with PGRL1A. Component of a mitochondrial large protein complex that contains, at least, MIC60, DGS1, TOM40, TOM20 proteins, and petC/RISP. [2Fe-2S] cluster serves as cofactor. As to expression, confined to photosynthetic tissues, with highest levels in flowers. In leaves, mostly localized in mesophyll cells. In stems, confined to the peripheral ring of chlorenchyma and adjoining groups of cells associated with the vascular bundles. In siliques, present in green wall of the fruit and in peduncle but not in the translucide white septum of the seeds.

Its subcellular location is the plastid. It localises to the chloroplast thylakoid membrane. The protein resides in the mitochondrion inner membrane. The enzyme catalyses 2 oxidized [plastocyanin] + a plastoquinol + 2 H(+)(in) = 2 reduced [plastocyanin] + a plastoquinone + 4 H(+)(out). Functionally, essential protein for photoautotrophism. Confers resistance to photo-oxidative damages by contributing to the thermal dissipation of light energy and to lumenal acidification (increase of pH gradient). Component of the cytochrome b6-f complex, which mediates electron transfer between photosystem II (PSII) and photosystem I (PSI), cyclic electron flow around PSI, and state transitions. In Arabidopsis thaliana (Mouse-ear cress), this protein is Cytochrome b6-f complex iron-sulfur subunit, chloroplastic.